Consider the following 178-residue polypeptide: ATP synthase subunit delta (178 aa).

This sequence belongs to the ATPase delta chain family. F-type ATPases have 2 components, F(1) - the catalytic core - and F(0) - the membrane proton channel. F(1) has five subunits: alpha(3), beta(3), gamma(1), delta(1), epsilon(1). F(0) has three main subunits: a(1), b(2) and c(10-14). The alpha and beta chains form an alternating ring which encloses part of the gamma chain. F(1) is attached to F(0) by a central stalk formed by the gamma and epsilon chains, while a peripheral stalk is formed by the delta and b chains.

The protein localises to the cell inner membrane. In terms of biological role, f(1)F(0) ATP synthase produces ATP from ADP in the presence of a proton or sodium gradient. F-type ATPases consist of two structural domains, F(1) containing the extramembraneous catalytic core and F(0) containing the membrane proton channel, linked together by a central stalk and a peripheral stalk. During catalysis, ATP synthesis in the catalytic domain of F(1) is coupled via a rotary mechanism of the central stalk subunits to proton translocation. Its function is as follows. This protein is part of the stalk that links CF(0) to CF(1). It either transmits conformational changes from CF(0) to CF(1) or is implicated in proton conduction. This Nitrosospira multiformis (strain ATCC 25196 / NCIMB 11849 / C 71) protein is ATP synthase subunit delta.